A 1480-amino-acid polypeptide reads, in one-letter code: Cystic fibrosis transmembrane conductance regulator (1480 aa).

Over 1 to 77 (MQRSPLEKAS…KLINALRRCF (77 aa)) the chain is Cytoplasmic. Residues 78 to 98 (FWRFMFYGIFLYLGEVTKAVQ) traverse the membrane as a helical segment. In terms of domain architecture, ABC transmembrane type-1 1 spans 81–365 (FMFYGIFLYL…WAVQTWYDSL (285 aa)). Topologically, residues 99-122 (PLLLGRIIASYDPDNKEERSIAIY) are extracellular. Residues 123-146 (LGIGLCLLFIVRTLLLHPAIFGLH) form a helical membrane-spanning segment. Topologically, residues 147-195 (HIGMQMRIAMFSLIYKKTLKLSSRVLDKISIGQLVSLLSNNLNKFDEGL) are cytoplasmic. A helical membrane pass occupies residues 196-216 (ALAHFVWIAPLQVALLMGLIW). Topologically, residues 217–222 (ELLQAS) are extracellular. Residues 223 to 243 (AFCGLGFLIVLALFQAGLGRM) form a helical membrane-spanning segment. Over 244–298 (MMKYRDQRAGKISERLVITSEMIENIQSVKAYCWEEAMEKMIENLRQTELKLTRK) the chain is Cytoplasmic. A helical membrane pass occupies residues 299-319 (AAYVRYFNSSAFFFSGFFVVF). The Extracellular portion of the chain corresponds to 320–339 (LSVLPYALIKGIILRKIFTT). Residues 340–358 (ISFCIVLRMAVTRQFPWAV) form a helical membrane-spanning segment. Topologically, residues 359 to 858 (QTWYDSLGAI…YLRYITVHKS (500 aa)) are cytoplasmic. ATP-binding positions include Trp401, Ser434, 458–465 (GSTGAGKT), and Gln493. The ABC transporter 1 domain maps to 423–646 (NGDDSLFFSN…RPDFSSKLMG (224 aa)). Cys524 carries S-palmitoyl cysteine lipidation. A phosphoserine mark is found at Ser549 and Ser660. The interval 654-831 (SAERRNSILT…EEINEEDLKE (178 aa)) is disordered R region. Ser670 is subject to Phosphoserine; by PKA. Ser686 bears the Phosphoserine mark. Lys688 participates in a covalent cross-link: Glycyl lysine isopeptide (Lys-Gly) (interchain with G-Cter in ubiquitin). 2 positions are modified to phosphoserine: Ser700 and Ser712. Position 717 is a phosphothreonine (Thr717). Phosphoserine occurs at positions 737, 753, 768, 790, 795, and 813. Residues 859–879 (LIFVLIWCLVIFLAEVAASLV) form a helical membrane-spanning segment. Residues 859-1155 (LIFVLIWCLV…AVNSSIDVDS (297 aa)) enclose the ABC transmembrane type-1 2 domain. The Extracellular segment spans residues 880–918 (VLWLLGNTPLQDKGNSTHSRNNSYAVIITSTSSYYVFYI). Asn894 and Asn900 each carry an N-linked (GlcNAc...) asparagine glycan. Residues 919–939 (YVGVADTLLAMGFFRGLPLVH) traverse the membrane as a discontinuously helical segment. Over 940–990 (TLITVSKILHHKMLHSVLQAPMSTLNTLKAGGILNRFSKDIAILDDLLPLT) the chain is Cytoplasmic. The chain crosses the membrane as a helical span at residues 991–1011 (IFDFIQLLLIVIGAIAVVAVL). At 1012 to 1013 (QP) the chain is on the extracellular side. A helical transmembrane segment spans residues 1014–1034 (YIFVATVPVIVAFIMLRAYFL). Residues 1035 to 1095 (QTSQQLKQLE…TANWFLYLST (61 aa)) are Cytoplasmic-facing. Residues 1096-1116 (LRWFQMRIEMIFVIFFIAVTF) form a helical membrane-spanning segment. Residues 1117-1130 (ISILTTGEGEGRVG) are Extracellular-facing. Residues 1131–1151 (IILTLAMNIMSTLQWAVNSSI) form a helical membrane-spanning segment. At 1152–1480 (DVDSLMRSVS…TEEEVQDTRL (329 aa)) the chain is on the cytoplasmic side. Residues 1210-1443 (MTVKDLTAKY…RSLFRQAISP (234 aa)) form the ABC transporter 2 domain. ATP contacts are provided by residues Tyr1219 and 1244–1251 (GRTGSGKS). Residues 1386–1480 (RTLKQAFADC…TEEEVQDTRL (95 aa)) form an interaction with GORASP2 region. A lipid anchor (S-palmitoyl cysteine) is attached at Cys1395. Phosphoserine is present on residues Ser1444 and Ser1456. The interval 1452–1480 (HRNSSKCKSKPQIAALKEETEEEVQDTRL) is disordered. Residues 1470 to 1480 (ETEEEVQDTRL) show a composition bias toward acidic residues. Positions 1478 to 1480 (TRL) match the PDZ-binding motif.

It belongs to the ABC transporter superfamily. ABCC family. CFTR transporter (TC 3.A.1.202) subfamily. In terms of assembly, monomer; does not require oligomerization for channel activity. May form oligomers in the membrane. Interacts with SLC26A3, SLC26A6 and NHERF1. Interacts with SHANK2. Interacts with MYO6. Interacts (via C-terminus) with GOPC (via PDZ domain); this promotes CFTR internalization and thereby decreases channel activity. Interacts with SLC4A7 through NHERF1. Found in a complex with MYO5B and RAB11A. Interacts with ANO1. Interacts with SLC26A8. Interacts with AHCYL1; the interaction increases CFTR activity. Interacts with CSE1L. The core-glycosylated form interacts with GORASP2 (via PDZ GRASP-type 1 domain) in respone to ER stress. Interacts with MARCHF2; the interaction leads to CFTR ubiqtuitination and degradation. Interacts with ADGRG2. N-glycosylated. In terms of processing, phosphorylated; cAMP treatment promotes phosphorylation and activates the channel. Dephosphorylation decreases the ATPase activity (in vitro). Phosphorylation at PKA sites activates the channel. Phosphorylation at PKC sites enhances the response to phosphorylation by PKA. Phosphorylated by AMPK; this inhibits channel activity. Post-translationally, ubiquitinated, leading to its degradation in the lysosome. Deubiquitination by USP10 in early endosomes enhances its endocytic recycling to the cell membrane. Ubiquitinated by RNF185 during ER stress. Ubiquitinated by MARCHF2.

Its subcellular location is the apical cell membrane. It localises to the early endosome membrane. The protein resides in the cell membrane. It is found in the recycling endosome membrane. The protein localises to the endoplasmic reticulum membrane. Its subcellular location is the nucleus. It carries out the reaction ATP + H2O + closed Cl(-) channel = ADP + phosphate + open Cl(-) channel.. The catalysed reaction is chloride(in) = chloride(out). It catalyses the reaction hydrogencarbonate(in) = hydrogencarbonate(out). The enzyme catalyses ATP + H2O = ADP + phosphate + H(+). Epithelial ion channel that plays an important role in the regulation of epithelial ion and water transport and fluid homeostasis. Mediates the transport of chloride ions across the cell membrane. Possesses an intrinsic ATPase activity and utilizes ATP to gate its channel; the passive flow of anions through the channel is gated by cycles of ATP binding and hydrolysis by the ATP-binding domains. The ion channel is also permeable to HCO(3)(-); selectivity depends on the extracellular chloride concentration. Exerts its function also by modulating the activity of other ion channels and transporters. Contributes to the regulation of the pH and the ion content of the epithelial fluid layer. Modulates the activity of the epithelial sodium channel (ENaC) complex, in part by regulating the cell surface expression of the ENaC complex. May regulate bicarbonate secretion and salvage in epithelial cells by regulating the transporter SLC4A7. Can inhibit the chloride channel activity of ANO1. Plays a role in the chloride and bicarbonate homeostasis during sperm epididymal maturation and capacitation. This is Cystic fibrosis transmembrane conductance regulator from Pan troglodytes (Chimpanzee).